An 88-amino-acid polypeptide reads, in one-letter code: Defensin-like protein 98 (88 aa).

The first 29 residues, 1 to 29, serve as a signal peptide directing secretion; that stretch reads MGSLRVSTVVIAVVACLSILLISPTEVDG. Disulfide bonds link C33/C76, C40/C62, C46/C73, and C50/C75.

The protein belongs to the DEFL family.

It is found in the secreted. The sequence is that of Defensin-like protein 98 from Arabidopsis thaliana (Mouse-ear cress).